Consider the following 292-residue polypeptide: MKLHFTKMHGAGNDFVVLDGIQTPIDFTPEQWAAIADRHFGVGADQLLLVERSTRPDVDFRYRIFNHDGGEVEHCGNGARCFVKFVTDRGLTDKRTVRVEVMNGIATLTMQDDGQVTVDMGAPVFEAARLPFLPEGLPTRTQGDDTQHALQINGRTEWLSTVSMGNPHAVQIVDDTEAFPVLEDGPLIESHAVFPRRVNAGFMQIVDRHSVRLRVYERGAGETLACGTGACAAVVAGIRRGLLDSPVKVATHGGDLTIAWAGDGQPVMMTGPATTVFEGTLDLDALKLTAAH.

Residues asparagine 13, glutamine 46, and asparagine 66 each contribute to the substrate site. The active-site Proton donor is the cysteine 75. Substrate contacts are provided by residues 76 to 77 (GN), asparagine 166, asparagine 199, and 217 to 218 (ER). The active-site Proton acceptor is cysteine 226. 227-228 (GT) provides a ligand contact to substrate.

It belongs to the diaminopimelate epimerase family. Homodimer.

Its subcellular location is the cytoplasm. It catalyses the reaction (2S,6S)-2,6-diaminopimelate = meso-2,6-diaminopimelate. It functions in the pathway amino-acid biosynthesis; L-lysine biosynthesis via DAP pathway; DL-2,6-diaminopimelate from LL-2,6-diaminopimelate: step 1/1. Functionally, catalyzes the stereoinversion of LL-2,6-diaminopimelate (L,L-DAP) to meso-diaminopimelate (meso-DAP), a precursor of L-lysine and an essential component of the bacterial peptidoglycan. The polypeptide is Diaminopimelate epimerase (Ralstonia pickettii (strain 12J)).